The primary structure comprises 261 residues: Methyl-coenzyme M reductase subunit gamma (261 aa).

Arginine 123 is a binding site for coenzyme M.

This sequence belongs to the methyl-coenzyme M reductase gamma subunit family. In terms of assembly, MCR is a hexamer of two alpha, two beta, and two gamma chains, forming a dimer of heterotrimers. Coenzyme F430 is required as a cofactor.

It localises to the cytoplasm. The catalysed reaction is coenzyme B + methyl-coenzyme M = methane + coenzyme M-coenzyme B heterodisulfide. Its pathway is one-carbon metabolism; methyl-coenzyme M reduction; methane from methyl-coenzyme M: step 1/1. Its function is as follows. Component of the methyl-coenzyme M reductase (MCR) I that catalyzes the reductive cleavage of methyl-coenzyme M (CoM-S-CH3 or 2-(methylthio)ethanesulfonate) using coenzyme B (CoB or 7-mercaptoheptanoylthreonine phosphate) as reductant which results in the production of methane and the mixed heterodisulfide of CoB and CoM (CoM-S-S-CoB). This is the final step in methanogenesis. In Methanococcus voltae, this protein is Methyl-coenzyme M reductase subunit gamma (mcrG).